The primary structure comprises 185 residues: Large ribosomal subunit protein uL5 (185 aa).

This sequence belongs to the universal ribosomal protein uL5 family. In terms of assembly, part of the 50S ribosomal subunit; part of the 5S rRNA/L5/L18/L25 subcomplex. Contacts the 5S rRNA and the P site tRNA. Forms a bridge to the 30S subunit in the 70S ribosome.

Its function is as follows. This is one of the proteins that bind and probably mediate the attachment of the 5S RNA into the large ribosomal subunit, where it forms part of the central protuberance. In the 70S ribosome it contacts protein S13 of the 30S subunit (bridge B1b), connecting the 2 subunits; this bridge is implicated in subunit movement. Contacts the P site tRNA; the 5S rRNA and some of its associated proteins might help stabilize positioning of ribosome-bound tRNAs. In Rhodopseudomonas palustris (strain BisA53), this protein is Large ribosomal subunit protein uL5.